A 677-amino-acid polypeptide reads, in one-letter code: DNA polymerase epsilon subunit B (677 aa).

It belongs to the DNA polymerase epsilon subunit B family. Heterotetramer. Consists of four subunits: POL2, DPB2, DPB3 and DPB4.

Its subcellular location is the nucleus. Its function is as follows. As accessory component of the DNA polymerase epsilon (DNA polymerase II) participates in chromosomal DNA replication. The polypeptide is DNA polymerase epsilon subunit B (DPB2) (Eremothecium gossypii (strain ATCC 10895 / CBS 109.51 / FGSC 9923 / NRRL Y-1056) (Yeast)).